We begin with the raw amino-acid sequence, 160 residues long: Troponin C, skeletal muscle (160 aa).

Residue Thr2 is modified to N-acetylthreonine. EF-hand domains are found at residues 15–50 (EMIA…LGQT), 51–86 (PTKE…QMKE), 91–126 (KSEE…SGEH), and 127–160 (VTDE…EGVQ). 19 residues coordinate Ca(2+): Asp28, Asp30, Asp34, Glu39, Asp64, Asp66, Ser68, Thr70, Glu75, Asp104, Asn106, Asp108, Tyr110, Glu115, Asp140, Asn142, Asp144, Arg146, and Glu151.

The protein belongs to the troponin C family.

Functionally, troponin is the central regulatory protein of striated muscle contraction. Tn consists of three components: Tn-I which is the inhibitor of actomyosin ATPase, Tn-T which contains the binding site for tropomyosin and Tn-C. The binding of calcium to Tn-C abolishes the inhibitory action of Tn on actin filaments. The protein is Troponin C, skeletal muscle (TNNC2) of Homo sapiens (Human).